We begin with the raw amino-acid sequence, 107 residues long: uncharacterized protein (107 aa).

The region spanning 6–107 is the Glutaredoxin domain; that stretch reads KKVIEQILDN…QAQVETLLAA (102 aa). A glutathione-binding site is contributed by K23. [2Fe-2S] cluster is bound at residue C31. Residues R60 and 85-86 contribute to the glutathione site; that span reads AD.

The protein belongs to the glutaredoxin family. Monothiol subfamily.

It localises to the plastid. Its subcellular location is the chloroplast. This is an uncharacterized protein from Porphyra purpurea (Red seaweed).